We begin with the raw amino-acid sequence, 275 residues long: Bis(5'-nucleosyl)-tetraphosphatase, symmetrical (275 aa).

The protein belongs to the Ap4A hydrolase family.

It carries out the reaction P(1),P(4)-bis(5'-adenosyl) tetraphosphate + H2O = 2 ADP + 2 H(+). Its function is as follows. Hydrolyzes diadenosine 5',5'''-P1,P4-tetraphosphate to yield ADP. This Photorhabdus laumondii subsp. laumondii (strain DSM 15139 / CIP 105565 / TT01) (Photorhabdus luminescens subsp. laumondii) protein is Bis(5'-nucleosyl)-tetraphosphatase, symmetrical.